Consider the following 212-residue polypeptide: Ribosome maturation factor RimM (212 aa).

Positions 105-181 (EEEFYYADLI…IDSITAGLDN (77 aa)) constitute a PRC barrel domain. Residues 181 to 212 (NAELSGEEDEAEGPESARGSRPRGPKSAGEPR) are disordered.

It belongs to the RimM family. In terms of assembly, binds ribosomal protein uS19.

It localises to the cytoplasm. Its function is as follows. An accessory protein needed during the final step in the assembly of 30S ribosomal subunit, possibly for assembly of the head region. Essential for efficient processing of 16S rRNA. May be needed both before and after RbfA during the maturation of 16S rRNA. It has affinity for free ribosomal 30S subunits but not for 70S ribosomes. The polypeptide is Ribosome maturation factor RimM (Chelativorans sp. (strain BNC1)).